The following is a 342-amino-acid chain: N-acetyl-gamma-glutamyl-phosphate reductase (342 aa).

Cys146 is a catalytic residue.

It belongs to the NAGSA dehydrogenase family. Type 1 subfamily.

The protein resides in the cytoplasm. It catalyses the reaction N-acetyl-L-glutamate 5-semialdehyde + phosphate + NADP(+) = N-acetyl-L-glutamyl 5-phosphate + NADPH + H(+). Its pathway is amino-acid biosynthesis; L-arginine biosynthesis; N(2)-acetyl-L-ornithine from L-glutamate: step 3/4. Its function is as follows. Catalyzes the NADPH-dependent reduction of N-acetyl-5-glutamyl phosphate to yield N-acetyl-L-glutamate 5-semialdehyde. The protein is N-acetyl-gamma-glutamyl-phosphate reductase of Saccharopolyspora erythraea (strain ATCC 11635 / DSM 40517 / JCM 4748 / NBRC 13426 / NCIMB 8594 / NRRL 2338).